The primary structure comprises 453 residues: Probable exopolygalacturonase B (453 aa).

The first 16 residues, Met-1 to Ser-16, serve as a signal peptide directing secretion. Asn-185 and Asn-225 each carry an N-linked (GlcNAc...) asparagine glycan. The active-site Proton donor is the Asp-255. The cysteines at positions 257 and 274 are disulfide-linked. Residues Asn-263 and Asn-275 are each glycosylated (N-linked (GlcNAc...) asparagine). Residue His-278 is part of the active site. PbH1 repeat units lie at residues Ile-295 to Ala-316 and Ile-327 to Gln-348. Residues Asn-302, Asn-329, Asn-354, and Asn-366 are each glycosylated (N-linked (GlcNAc...) asparagine). A PbH1 3 repeat occupies Pro-362 to Asn-405. An intrachain disulfide couples Cys-392 to Cys-398. Residue Asn-436 is glycosylated (N-linked (GlcNAc...) asparagine).

Belongs to the glycosyl hydrolase 28 family.

It localises to the secreted. The enzyme catalyses [(1-&gt;4)-alpha-D-galacturonosyl](n) + H2O = alpha-D-galacturonate + [(1-&gt;4)-alpha-D-galacturonosyl](n-1). Its function is as follows. Specific in hydrolyzing the terminal glycosidic bond of polygalacturonic acid and oligogalacturonates. The chain is Probable exopolygalacturonase B (pgxB) from Neosartorya fischeri (strain ATCC 1020 / DSM 3700 / CBS 544.65 / FGSC A1164 / JCM 1740 / NRRL 181 / WB 181) (Aspergillus fischerianus).